The primary structure comprises 340 residues: Phosphate acyltransferase (340 aa).

Belongs to the PlsX family. Homodimer. Probably interacts with PlsY.

The protein localises to the cytoplasm. The enzyme catalyses a fatty acyl-[ACP] + phosphate = an acyl phosphate + holo-[ACP]. The protein operates within lipid metabolism; phospholipid metabolism. Functionally, catalyzes the reversible formation of acyl-phosphate (acyl-PO(4)) from acyl-[acyl-carrier-protein] (acyl-ACP). This enzyme utilizes acyl-ACP as fatty acyl donor, but not acyl-CoA. This is Phosphate acyltransferase from Nitrosococcus oceani (strain ATCC 19707 / BCRC 17464 / JCM 30415 / NCIMB 11848 / C-107).